The chain runs to 488 residues: UDP-N-acetylmuramoyl-L-alanyl-D-glutamate--2,6-diaminopimelate ligase (488 aa).

UDP-N-acetyl-alpha-D-muramoyl-L-alanyl-D-glutamate contacts are provided by residues L24, S26, and 41-43 (HQV). Position 113–119 (113–119 (GTNGKTT)) interacts with ATP. Residues N154, 155–156 (TT), S182, Q188, and R190 contribute to the UDP-N-acetyl-alpha-D-muramoyl-L-alanyl-D-glutamate site. Position 222 is an N6-carboxylysine (K222). Residues R386, 410-413 (DNPR), G461, and E465 each bind meso-2,6-diaminopimelate. Residues 410–413 (DNPR) carry the Meso-diaminopimelate recognition motif motif.

Belongs to the MurCDEF family. MurE subfamily. Mg(2+) is required as a cofactor. Carboxylation is probably crucial for Mg(2+) binding and, consequently, for the gamma-phosphate positioning of ATP.

Its subcellular location is the cytoplasm. The catalysed reaction is UDP-N-acetyl-alpha-D-muramoyl-L-alanyl-D-glutamate + meso-2,6-diaminopimelate + ATP = UDP-N-acetyl-alpha-D-muramoyl-L-alanyl-gamma-D-glutamyl-meso-2,6-diaminopimelate + ADP + phosphate + H(+). The protein operates within cell wall biogenesis; peptidoglycan biosynthesis. Functionally, catalyzes the addition of meso-diaminopimelic acid to the nucleotide precursor UDP-N-acetylmuramoyl-L-alanyl-D-glutamate (UMAG) in the biosynthesis of bacterial cell-wall peptidoglycan. This Haemophilus influenzae (strain PittEE) protein is UDP-N-acetylmuramoyl-L-alanyl-D-glutamate--2,6-diaminopimelate ligase.